The following is a 70-amino-acid chain: Drosomycin (70 aa).

The first 20 residues, 1-20, serve as a signal peptide directing secretion; the sequence is MMQIKYLFALFAVLMLVVLG. The propeptide occupies 21–26; it reads ANEADA. Disulfide bonds link Cys-28/Cys-70, Cys-37/Cys-59, Cys-45/Cys-65, and Cys-49/Cys-67. Residue Asn-42 is glycosylated (N-linked (GlcNAc...) asparagine).

Hemolymph (at protein level). Synthesized in the fat body and is secreted into the blood. In larvae, expressed in the visceral branches and posterior spiracles of the trachea.

It is found in the secreted. Its function is as follows. Possesses antifungal activity and is active against a relatively broad spectrum of filamentous fungi. It inhibits spore germination at high concentrations and at low concentrations delays growth of hyphae which subsequently exhibit abnormal morphology. Spz C-106 in the hemolymph controls expression of the antifungal peptide by acting as a ligand of Tl and inducing an intracellular signaling pathway. Part of a psh-dependent Toll pathway, which may function in activating the systematic immune response in response to localized melanization of the tracheal system. The chain is Drosomycin (Drs) from Drosophila melanogaster (Fruit fly).